The sequence spans 892 residues: Alpha-actinin-1 (892 aa).

An N-acetylmethionine modification is found at M1. Positions 1–247 are actin-binding; it reads MDHYDSQQTN…IMTYVSSFYH (247 aa). S6 carries the phosphoserine modification. Position 12 is a phosphotyrosine; by FAK1 (Y12). Calponin-homology (CH) domains lie at 31-135 and 144-250; these read KQQR…LRFA and TSAK…HAFS. K95 and K195 each carry N6-acetyllysine. Spectrin repeat units lie at residues 274-384, 394-499, 509-620, and 630-733; these read QLME…WLLN, HLAE…ALER, QLYL…ALTE, and RLRK…EVEN. Residues 274 to 733 are interaction with DDN; the sequence is QLMEDYEKLA…IARTINEVEN (460 aa). S471 bears the Phosphoserine mark. K676 bears the N6-acetyllysine mark. Phosphoserine is present on S677. 2 consecutive EF-hand domains span residues 746-781 and 787-822; these read EQMN…LGYD and QGEA…ETAD. Ca(2+) contacts are provided by D759, D761, S763, T765, and E770. S890 carries the phosphoserine modification.

The protein belongs to the alpha-actinin family. In terms of assembly, homodimer; antiparallel. Interacts with MYOZ2, TTID and LPP. Interacts with DDN. Interacts with PSD. Interacts with MICALL2. Interacts with DNM2 and CTTN. Interacts with PDLIM1. Interacts with PDLIM2. Interacts with PDLIM4 (via PDZ domain). Interacts with IGSF8.

Its subcellular location is the cytoplasm. The protein resides in the cytoskeleton. It is found in the myofibril. It localises to the sarcomere. The protein localises to the z line. Its subcellular location is the cell membrane. The protein resides in the cell junction. It is found in the cell projection. It localises to the ruffle. Its function is as follows. F-actin cross-linking protein which is thought to anchor actin to a variety of intracellular structures. Association with IGSF8 regulates the immune synapse formation and is required for efficient T-cell activation. The chain is Alpha-actinin-1 (ACTN1) from Macaca fascicularis (Crab-eating macaque).